Reading from the N-terminus, the 353-residue chain is Protein RecA (353 aa).

Residue 75 to 82 (GPESSGKT) coordinates ATP.

This sequence belongs to the RecA family.

The protein resides in the cytoplasm. Its function is as follows. Can catalyze the hydrolysis of ATP in the presence of single-stranded DNA, the ATP-dependent uptake of single-stranded DNA by duplex DNA, and the ATP-dependent hybridization of homologous single-stranded DNAs. It interacts with LexA causing its activation and leading to its autocatalytic cleavage. This chain is Protein RecA, found in Cupriavidus pinatubonensis (strain JMP 134 / LMG 1197) (Cupriavidus necator (strain JMP 134)).